Reading from the N-terminus, the 452-residue chain is tRNA modification GTPase MnmE (452 aa).

(6S)-5-formyl-5,6,7,8-tetrahydrofolate-binding residues include R22, E79, and K119. The TrmE-type G domain occupies 215–375 (GMKVVIAGRP…LRQHLKQSMG (161 aa)). Position 225 (N225) interacts with K(+). GTP is bound by residues 225-230 (NAGKSS), 244-250 (TDIAGTT), 269-272 (DTAG), and 333-336 (NKAD). Residue S229 participates in Mg(2+) binding. Residues T244, I246, and T249 each coordinate K(+). T250 serves as a coordination point for Mg(2+). (6S)-5-formyl-5,6,7,8-tetrahydrofolate is bound at residue K452.

It belongs to the TRAFAC class TrmE-Era-EngA-EngB-Septin-like GTPase superfamily. TrmE GTPase family. In terms of assembly, homodimer. Heterotetramer of two MnmE and two MnmG subunits. K(+) is required as a cofactor.

Its subcellular location is the cytoplasm. Functionally, exhibits a very high intrinsic GTPase hydrolysis rate. Involved in the addition of a carboxymethylaminomethyl (cmnm) group at the wobble position (U34) of certain tRNAs, forming tRNA-cmnm(5)s(2)U34. The sequence is that of tRNA modification GTPase MnmE from Histophilus somni (strain 2336) (Haemophilus somnus).